The sequence spans 262 residues: Small ribosomal subunit protein eS4C (262 aa).

In terms of domain architecture, S4 RNA-binding spans 42–105 (LPLIVFLRNR…GEHFRLVYDI (64 aa)). Threonine 194 is modified (phosphothreonine).

It belongs to the eukaryotic ribosomal protein eS4 family. Component of the small ribosomal subunit (SSU). Mature yeast ribosomes consist of a small (40S) and a large (60S) subunit. The 40S small subunit contains 1 molecule of ribosomal RNA (18S rRNA) and at least 33 different proteins. The large 60S subunit contains 3 rRNA molecules (25S, 5.8S and 5S rRNA) and at least 46 different proteins.

The protein resides in the cytoplasm. Component of the ribosome, a large ribonucleoprotein complex responsible for the synthesis of proteins in the cell. The small ribosomal subunit (SSU) binds messenger RNAs (mRNAs) and translates the encoded message by selecting cognate aminoacyl-transfer RNA (tRNA) molecules. The large subunit (LSU) contains the ribosomal catalytic site termed the peptidyl transferase center (PTC), which catalyzes the formation of peptide bonds, thereby polymerizing the amino acids delivered by tRNAs into a polypeptide chain. The nascent polypeptides leave the ribosome through a tunnel in the LSU and interact with protein factors that function in enzymatic processing, targeting, and the membrane insertion of nascent chains at the exit of the ribosomal tunnel. This Schizosaccharomyces pombe (strain 972 / ATCC 24843) (Fission yeast) protein is Small ribosomal subunit protein eS4C (rps403).